Consider the following 294-residue polypeptide: Serine/threonine-protein kinase Aurora-1 (294 aa).

The 252-residue stretch at Phe31–Ile282 folds into the Protein kinase domain. ATP contacts are provided by residues Leu37–Val45 and Lys60. Asp154 (proton acceptor) is an active-site residue. Ser176 is subject to Phosphoserine. Position 185 is a phosphothreonine (Thr185).

It belongs to the protein kinase superfamily. Ser/Thr protein kinase family. Aurora subfamily. As to quaternary structure, interacts with TPX2. In terms of processing, phosphorylation at Thr-185 may regulate activity and degradation of AUR1 in a cell cycle dependent manner. As to expression, abundant in roots, flowers and flower buds, low or absent in expanded leaves, stems and siliques.

Its subcellular location is the nucleus membrane. It localises to the cytoplasm. The protein resides in the cytoskeleton. It is found in the spindle. The protein localises to the spindle pole. Its subcellular location is the phragmoplast. It catalyses the reaction L-seryl-[protein] + ATP = O-phospho-L-seryl-[protein] + ADP + H(+). The enzyme catalyses L-threonyl-[protein] + ATP = O-phospho-L-threonyl-[protein] + ADP + H(+). Functionally, phosphorylates specifically 'Ser-10' of histone H3 in vitro and colocalizes with phosphorylated histone H3 during mitosis. Associates with cytoskeletal structures that are necessary for cytokinesis and with the microtubule spindle. Also colocalizes with gamma-tubulin and function in microtubule organizing centers (MTOCs). In contrast with the mammalian B-type Aurora, AUR1 has no kinase activity toward 'Ser-28' of histone H3. This Arabidopsis thaliana (Mouse-ear cress) protein is Serine/threonine-protein kinase Aurora-1 (AUR1).